Reading from the N-terminus, the 206-residue chain is Orotate phosphoribosyltransferase (206 aa).

5-phospho-alpha-D-ribose 1-diphosphate-binding positions include R114, K115, K118, H120, and 141–149; that span reads EDVVTTGQS. T145 and R173 together coordinate orotate.

The protein belongs to the purine/pyrimidine phosphoribosyltransferase family. PyrE subfamily. In terms of assembly, homodimer. Mg(2+) serves as cofactor.

The enzyme catalyses orotidine 5'-phosphate + diphosphate = orotate + 5-phospho-alpha-D-ribose 1-diphosphate. The protein operates within pyrimidine metabolism; UMP biosynthesis via de novo pathway; UMP from orotate: step 1/2. Functionally, catalyzes the transfer of a ribosyl phosphate group from 5-phosphoribose 1-diphosphate to orotate, leading to the formation of orotidine monophosphate (OMP). The sequence is that of Orotate phosphoribosyltransferase from Nostoc sp. (strain PCC 7120 / SAG 25.82 / UTEX 2576).